Consider the following 502-residue polypeptide: N-fatty-acyl-amino acid synthase/hydrolase PM20D1 (502 aa).

A signal peptide spans 1-25; the sequence is MAQRCVCVLALVAMLLLVFPTVSRS. His-125 serves as a coordination point for Zn(2+). The active site involves Asp-127. Asp-157 serves as a coordination point for Zn(2+). The active-site Proton acceptor is the Glu-191. Zn(2+) is bound by residues Glu-192 and Asp-217. Asn-252 carries an N-linked (GlcNAc...) asparagine glycan. His-464 provides a ligand contact to Zn(2+).

The protein belongs to the peptidase M20A family. It depends on Zn(2+) as a cofactor.

It localises to the secreted. The enzyme catalyses an N-acyl-L-amino acid + H2O = an L-alpha-amino acid + a carboxylate. It catalyses the reaction an N-acyl-aromatic L-alpha-amino acid + H2O = an aromatic L-alpha-amino acid + a carboxylate. It carries out the reaction L-phenylalanine + (9Z)-octadecenoate = N-(9Z-octadecenoyl)-L-phenylalanine + H2O. The catalysed reaction is N-(9Z-octadecenoyl)-L-leucine + H2O = L-leucine + (9Z)-octadecenoate. The enzyme catalyses N-(5Z,8Z,11Z,14Z)-eicosatetraenoyl-glycine + H2O = (5Z,8Z,11Z,14Z)-eicosatetraenoate + glycine. It catalyses the reaction N-hexadecanoyl-L-phenylalanine + H2O = hexadecanoate + L-phenylalanine. It carries out the reaction N-octadecanoyl-L-phenylalanine + H2O = octadecanoate + L-phenylalanine. The catalysed reaction is N-(4Z,7Z,10Z,13Z,16Z,19Z-docosahexaenoyl)-L-phenylalanine + H2O = (4Z,7Z,10Z,13Z,16Z,19Z)-docosahexaenoate + L-phenylalanine. The enzyme catalyses N-(9Z-octadecenoyl)-L-asparagine + H2O = L-asparagine + (9Z)-octadecenoate. It catalyses the reaction (9Z)-octadecenoate + glycine = N-(9Z-octadecenoyl)glycine + H2O. It carries out the reaction N-(9Z-octadecenoyl)-L-lysine + H2O = L-lysine + (9Z)-octadecenoate. The catalysed reaction is N-(9Z-octadecenoyl)-L-methionine + H2O = (9Z)-octadecenoate + L-methionine. The enzyme catalyses N-(9Z-octadecenoyl)-L-serine + H2O = L-serine + (9Z)-octadecenoate. It catalyses the reaction N-(9Z-octadecenoyl)-L-tryptophan + H2O = L-tryptophan + (9Z)-octadecenoate. It carries out the reaction N-(9Z-octadecenoyl)-L-tyrosine + H2O = L-tyrosine + (9Z)-octadecenoate. The catalysed reaction is N-(9Z-octadecenoyl)-L-glutamine + H2O = L-glutamine + (9Z)-octadecenoate. The enzyme catalyses N-(5Z,8Z,11Z,14Z-eicosatetraenoyl)-L-serine + H2O = (5Z,8Z,11Z,14Z)-eicosatetraenoate + L-serine. It catalyses the reaction (5Z,8Z,11Z,14Z)-eicosatetraenoate + L-phenylalanine = N-(5Z,8Z,11Z,14Z-eicosatetraenoyl)-L-phenylalanine + H2O. It functions in the pathway amino-acid metabolism. The protein operates within energy metabolism. Its pathway is lipid metabolism; fatty acid metabolism. With respect to regulation, lipoproteins are powerful coactivators of PM20D1 activity in vitro and NAA biosynthesis in vivo. In terms of biological role, secreted enzyme that regulates the endogenous N-fatty acyl amino acid (NAAs) tissue and circulating levels by functioning as a bidirectional NAA synthase/hydrolase. It condenses free fatty acids and free amino acids to generate NAAs and bidirectionally catalyzes the reverse hydrolysis reaction. Some of these NAAs stimulate oxidative metabolism via mitochondrial uncoupling, increasing energy expenditure in a UPC1-independent manner. Thereby, this secreted protein may indirectly regulate whole body energy expenditure. PM20D1 circulates in tight association with both low- and high-density (LDL and HDL,respectively) lipoprotein particles. This chain is N-fatty-acyl-amino acid synthase/hydrolase PM20D1, found in Homo sapiens (Human).